We begin with the raw amino-acid sequence, 568 residues long: Proline--tRNA ligase (568 aa).

Belongs to the class-II aminoacyl-tRNA synthetase family. ProS type 1 subfamily. In terms of assembly, homodimer.

The protein localises to the cytoplasm. The enzyme catalyses tRNA(Pro) + L-proline + ATP = L-prolyl-tRNA(Pro) + AMP + diphosphate. Catalyzes the attachment of proline to tRNA(Pro) in a two-step reaction: proline is first activated by ATP to form Pro-AMP and then transferred to the acceptor end of tRNA(Pro). As ProRS can inadvertently accommodate and process non-cognate amino acids such as alanine and cysteine, to avoid such errors it has two additional distinct editing activities against alanine. One activity is designated as 'pretransfer' editing and involves the tRNA(Pro)-independent hydrolysis of activated Ala-AMP. The other activity is designated 'posttransfer' editing and involves deacylation of mischarged Ala-tRNA(Pro). The misacylated Cys-tRNA(Pro) is not edited by ProRS. The chain is Proline--tRNA ligase from Lysinibacillus sphaericus (strain C3-41).